Reading from the N-terminus, the 201-residue chain is LexA repressor 1 (201 aa).

The segment at residues 28-48 is a DNA-binding region (H-T-H motif); that stretch reads LREIAAHLKISGTLGVSKHLE. Residues serine 120 and lysine 157 each act as for autocatalytic cleavage activity in the active site.

The protein belongs to the peptidase S24 family. Homodimer.

It catalyses the reaction Hydrolysis of Ala-|-Gly bond in repressor LexA.. Functionally, represses a number of genes involved in the response to DNA damage (SOS response), including recA and lexA. In the presence of single-stranded DNA, RecA interacts with LexA causing an autocatalytic cleavage which disrupts the DNA-binding part of LexA, leading to derepression of the SOS regulon and eventually DNA repair. The protein is LexA repressor 1 of Geobacter sulfurreducens (strain ATCC 51573 / DSM 12127 / PCA).